A 154-amino-acid polypeptide reads, in one-letter code: SsrA-binding protein (154 aa).

It belongs to the SmpB family.

It is found in the cytoplasm. In terms of biological role, required for rescue of stalled ribosomes mediated by trans-translation. Binds to transfer-messenger RNA (tmRNA), required for stable association of tmRNA with ribosomes. tmRNA and SmpB together mimic tRNA shape, replacing the anticodon stem-loop with SmpB. tmRNA is encoded by the ssrA gene; the 2 termini fold to resemble tRNA(Ala) and it encodes a 'tag peptide', a short internal open reading frame. During trans-translation Ala-aminoacylated tmRNA acts like a tRNA, entering the A-site of stalled ribosomes, displacing the stalled mRNA. The ribosome then switches to translate the ORF on the tmRNA; the nascent peptide is terminated with the 'tag peptide' encoded by the tmRNA and targeted for degradation. The ribosome is freed to recommence translation, which seems to be the essential function of trans-translation. In Acetivibrio thermocellus (strain ATCC 27405 / DSM 1237 / JCM 9322 / NBRC 103400 / NCIMB 10682 / NRRL B-4536 / VPI 7372) (Clostridium thermocellum), this protein is SsrA-binding protein.